Reading from the N-terminus, the 199-residue chain is Alkyl hydroperoxide reductase C (199 aa).

Residues 2–163 (VLVTYPAPDF…TLRMIDALHF (162 aa)) enclose the Thioredoxin domain. The Cysteine sulfenic acid (-SOH) intermediate role is filled by C50.

The protein belongs to the peroxiredoxin family. AhpC/Prx1 subfamily. As to quaternary structure, homodimer; disulfide-linked, upon oxidation. 5 homodimers assemble to form a ring-like decamer.

The protein resides in the cytoplasm. The enzyme catalyses a hydroperoxide + NADH + H(+) = an alcohol + NAD(+) + H2O. Functionally, thiol-specific peroxidase that catalyzes the reduction of hydrogen peroxide and organic hydroperoxides to water and alcohols, respectively. Plays a role in cell protection against oxidative stress by detoxifying peroxides. In Buchnera aphidicola subsp. Baizongia pistaciae (strain Bp), this protein is Alkyl hydroperoxide reductase C.